Here is a 127-residue protein sequence, read N- to C-terminus: Snaclec bothroinsularin subunit beta (127 aa).

Intrachain disulfides connect cysteine 2/cysteine 13, cysteine 30/cysteine 123, and cysteine 100/cysteine 115. Residues 9–124 (YEGSCYRVFE…CTKLEYFVCE (116 aa)) form the C-type lectin domain.

Belongs to the snaclec family. Heterodimer of subunits alpha and beta; disulfide-linked. In terms of tissue distribution, expressed by the venom gland.

It localises to the secreted. Thrombin and prothrombin (F2) inhibitor. The IC(50) of thrombin-induced platelet aggregation and fibrinocoagulation is 62 and 35 nM, respectively. Its inhibitory activity is at least 10-fold lower than that observed for other thrombin inhibitors. This is Snaclec bothroinsularin subunit beta from Bothrops insularis (Golden lancehead).